Consider the following 525-residue polypeptide: GMP synthase [glutamine-hydrolyzing] (525 aa).

The Glutamine amidotransferase type-1 domain occupies 9 to 207 (RILILDFGSQ…VRDICQCEAL (199 aa)). The Nucleophile role is filled by Cys-86. Residues His-181 and Glu-183 contribute to the active site. A GMPS ATP-PPase domain is found at 208–400 (WTPAKIIDDA…LGLPYDMLYR (193 aa)). Position 235 to 241 (235 to 241 (SGGVDSS)) interacts with ATP.

As to quaternary structure, homodimer.

The catalysed reaction is XMP + L-glutamine + ATP + H2O = GMP + L-glutamate + AMP + diphosphate + 2 H(+). It participates in purine metabolism; GMP biosynthesis; GMP from XMP (L-Gln route): step 1/1. Catalyzes the synthesis of GMP from XMP. This Escherichia coli O139:H28 (strain E24377A / ETEC) protein is GMP synthase [glutamine-hydrolyzing].